The following is a 206-amino-acid chain: Putative cryptic phosphonate transport system permease protein PhnE1 (206 aa).

The next 3 membrane-spanning stretches (helical) occupy residues 30-50 (WFSLLSWAVVLAVLVVSWQGA), 92-112 (IAVWGTALAVVLSIPFGLMSA), and 137-157 (MVFAMLFVVAVGLGPFAGVLA).

As to quaternary structure, if the reading frame is restored, the complex is composed of two ATP-binding proteins (PhnC), two transmembrane proteins (PhnE) and a solute-binding protein (PhnD).

It is found in the cell inner membrane. Its function is as follows. N-terminal fragment of the PhnE protein, part of a phosphonate usage operon that is cryptic in K12 strains. Growth of K12 strains on phosphonate can be observed when it is used as the sole phosphorus source after a 60 hour lag period, suggesting the operon is activated. An intact PhnE in strain B is (AC A0A140NFA3). Part of the binding-protein-dependent transport system for phosphonates; probably responsible for the translocation of the substrate across the membrane. This Escherichia coli (strain K12) protein is Putative cryptic phosphonate transport system permease protein PhnE1 (phnE1).